A 469-amino-acid polypeptide reads, in one-letter code: Probable glucuronoxylan glucuronosyltransferase F8H (469 aa).

Topologically, residues 1-36 are cytoplasmic; sequence MSLDIKKPNITKTKKKKTGFVVKMQLNNNRGGNKRN. Residues 37–57 form a helical; Signal-anchor for type II membrane protein membrane-spanning segment; that stretch reads IFIFFFFRNYYTWILWFCLSL. Residues 58 to 469 lie on the Lumenal side of the membrane; sequence YFFTSYFSVE…RVLSQREVDM (412 aa). Residues N171, N203, N301, and N411 are each glycosylated (N-linked (GlcNAc...) asparagine).

It belongs to the glycosyltransferase 47 family. In terms of tissue distribution, expressed in xylem cells in stems and in roots.

It localises to the golgi apparatus membrane. In terms of biological role, involved in the synthesis of the hemicellulose glucuronoxylan, a major component of secondary cell walls. Probably involved in the synthesis of the glycosyl sequence at the glucuronoxylan reducing end. The sequence is that of Probable glucuronoxylan glucuronosyltransferase F8H (F8H) from Arabidopsis thaliana (Mouse-ear cress).